A 272-amino-acid polypeptide reads, in one-letter code: Eukaryotic translation initiation factor 4E homolog (272 aa).

The segment at 249–272 is disordered; it reads GKLNSGRKPSNTRGGFSSFGNKRY. Residues 255–272 show a composition bias toward polar residues; it reads RKPSNTRGGFSSFGNKRY.

Belongs to the eukaryotic initiation factor 4E family.

Recognizes and binds the 7-methylguanosine-containing mRNA cap during an early step in the initiation of protein synthesis and facilitates ribosome binding by inducing the unwinding of the mRNAs secondary structures. The protein is Eukaryotic translation initiation factor 4E homolog of Acanthamoeba polyphaga mimivirus (APMV).